A 67-amino-acid chain; its full sequence is DNA-directed RNA polymerase subunit omega (67 aa).

The protein belongs to the RNA polymerase subunit omega family. In terms of assembly, the RNAP catalytic core consists of 2 alpha, 1 beta, 1 beta' and 1 omega subunit. When a sigma factor is associated with the core the holoenzyme is formed, which can initiate transcription.

It carries out the reaction RNA(n) + a ribonucleoside 5'-triphosphate = RNA(n+1) + diphosphate. In terms of biological role, promotes RNA polymerase assembly. Latches the N- and C-terminal regions of the beta' subunit thereby facilitating its interaction with the beta and alpha subunits. In Leptothrix cholodnii (strain ATCC 51168 / LMG 8142 / SP-6) (Leptothrix discophora (strain SP-6)), this protein is DNA-directed RNA polymerase subunit omega.